Consider the following 407-residue polypeptide: 1-deoxy-D-xylulose 5-phosphate reductoisomerase (407 aa).

6 residues coordinate NADPH: Thr25, Gly26, Ser27, Ile28, Asn53, and Asn136. Lys137 lines the 1-deoxy-D-xylulose 5-phosphate pocket. Glu138 contributes to the NADPH binding site. Position 162 (Asp162) interacts with Mn(2+). 1-deoxy-D-xylulose 5-phosphate-binding residues include Ser163, Glu164, Ser188, and His211. Glu164 contacts Mn(2+). Residue Gly217 coordinates NADPH. 1-deoxy-D-xylulose 5-phosphate-binding residues include Ser224, Asn229, Lys230, and Glu233. A Mn(2+)-binding site is contributed by Glu233.

This sequence belongs to the DXR family. Mg(2+) is required as a cofactor. The cofactor is Mn(2+).

It catalyses the reaction 2-C-methyl-D-erythritol 4-phosphate + NADP(+) = 1-deoxy-D-xylulose 5-phosphate + NADPH + H(+). The protein operates within isoprenoid biosynthesis; isopentenyl diphosphate biosynthesis via DXP pathway; isopentenyl diphosphate from 1-deoxy-D-xylulose 5-phosphate: step 1/6. Catalyzes the NADPH-dependent rearrangement and reduction of 1-deoxy-D-xylulose-5-phosphate (DXP) to 2-C-methyl-D-erythritol 4-phosphate (MEP). This Rhodopseudomonas palustris (strain TIE-1) protein is 1-deoxy-D-xylulose 5-phosphate reductoisomerase.